A 413-amino-acid polypeptide reads, in one-letter code: Peptidase T (413 aa).

Histidine 81 contacts Zn(2+). The active site involves aspartate 83. Residue aspartate 143 coordinates Zn(2+). Glutamate 178 (proton acceptor) is an active-site residue. The Zn(2+) site is built by glutamate 179, aspartate 201, and histidine 383.

It belongs to the peptidase M20B family. As to quaternary structure, homodimer. Requires Zn(2+) as cofactor.

The protein resides in the cytoplasm. It carries out the reaction Release of the N-terminal residue from a tripeptide.. With respect to regulation, inhibited by EDTA, by the reducing agents dithiothreitol and 13-mercaptoethanol, and by the divalent cation Cu(2+). Cleaves the N-terminal amino acid of tripeptides. Has a broad specificity for tripeptides with no clear preference for a particular tripeptide. Tripeptides with proline in the second position are an exception and are not hydrolyzed. Does not hydrolyze dipeptides, tetrapeptides, or oligopeptides. This Lactococcus lactis subsp. cremoris (Streptococcus cremoris) protein is Peptidase T (pepT).